Here is a 173-residue protein sequence, read N- to C-terminus: Shikimate kinase (173 aa).

ATP is bound at residue 14–19 (GAGKST). Ser18 provides a ligand contact to Mg(2+). Residues Asp36, Arg60, and Gly82 each coordinate substrate. An ATP-binding site is contributed by Arg120. Residue Arg140 coordinates substrate. Gln157 is a binding site for ATP.

This sequence belongs to the shikimate kinase family. As to quaternary structure, monomer. The cofactor is Mg(2+).

Its subcellular location is the cytoplasm. The enzyme catalyses shikimate + ATP = 3-phosphoshikimate + ADP + H(+). The protein operates within metabolic intermediate biosynthesis; chorismate biosynthesis; chorismate from D-erythrose 4-phosphate and phosphoenolpyruvate: step 5/7. Functionally, catalyzes the specific phosphorylation of the 3-hydroxyl group of shikimic acid using ATP as a cosubstrate. The protein is Shikimate kinase of Buchnera aphidicola subsp. Schizaphis graminum (strain Sg).